Consider the following 338-residue polypeptide: MTRF1L release factor glutamine methyltransferase (338 aa).

S-adenosyl-L-methionine-binding positions include 167-171, D190, W225, and N239; that span reads GCGSG. Substrate is bound at residue 239-242; the sequence is NPPY.

This sequence belongs to the protein N5-glutamine methyltransferase family.

The protein localises to the mitochondrion. It carries out the reaction L-glutaminyl-[peptide chain release factor] + S-adenosyl-L-methionine = N(5)-methyl-L-glutaminyl-[peptide chain release factor] + S-adenosyl-L-homocysteine + H(+). N5-glutamine methyltransferase responsible for the methylation of the glutamine residue in the universally conserved GGQ motif of the mitochondrial translation release factors MTRF1, MTRF1L, MRPL58/ICT1 and MTRFR. In Homo sapiens (Human), this protein is MTRF1L release factor glutamine methyltransferase (HEMK1).